A 160-amino-acid polypeptide reads, in one-letter code: Cyanate hydratase (160 aa).

Active-site residues include Arg-100, Glu-103, and Ser-126.

The protein belongs to the cyanase family.

The enzyme catalyses cyanate + hydrogencarbonate + 3 H(+) = NH4(+) + 2 CO2. Functionally, catalyzes the reaction of cyanate with bicarbonate to produce ammonia and carbon dioxide. The sequence is that of Cyanate hydratase from Arthroderma otae (strain ATCC MYA-4605 / CBS 113480) (Microsporum canis).